The sequence spans 492 residues: ATP synthase subunit beta, plastid (492 aa).

170 to 177 (GGAGVGKT) provides a ligand contact to ATP.

It belongs to the ATPase alpha/beta chains family. F-type ATPases have 2 components, CF(1) - the catalytic core - and CF(0) - the membrane proton channel. CF(1) has five subunits: alpha(3), beta(3), gamma(1), delta(1), epsilon(1). CF(0) has four main subunits: a(1), b(1), b'(1) and c(9-12).

It is found in the plastid membrane. It carries out the reaction ATP + H2O + 4 H(+)(in) = ADP + phosphate + 5 H(+)(out). Functionally, produces ATP from ADP in the presence of a proton gradient across the membrane. The catalytic sites are hosted primarily by the beta subunits. The polypeptide is ATP synthase subunit beta, plastid (Aneura mirabilis (Parasitic liverwort)).